Reading from the N-terminus, the 190-residue chain is Threonylcarbamoyl-AMP synthase (190 aa).

Residues 8-190 (RFRIRQCAAR…DAESGAVIRA (183 aa)) form the YrdC-like domain.

This sequence belongs to the SUA5 family. TsaC subfamily.

The protein localises to the cytoplasm. The catalysed reaction is L-threonine + hydrogencarbonate + ATP = L-threonylcarbamoyladenylate + diphosphate + H2O. Required for the formation of a threonylcarbamoyl group on adenosine at position 37 (t(6)A37) in tRNAs that read codons beginning with adenine. Catalyzes the conversion of L-threonine, HCO(3)(-)/CO(2) and ATP to give threonylcarbamoyl-AMP (TC-AMP) as the acyladenylate intermediate, with the release of diphosphate. The protein is Threonylcarbamoyl-AMP synthase of Alkalilimnicola ehrlichii (strain ATCC BAA-1101 / DSM 17681 / MLHE-1).